The sequence spans 229 residues: Uracil-DNA glycosylase (229 aa).

Catalysis depends on D65, which acts as the Proton acceptor.

It belongs to the uracil-DNA glycosylase (UDG) superfamily. UNG family.

The protein localises to the cytoplasm. The enzyme catalyses Hydrolyzes single-stranded DNA or mismatched double-stranded DNA and polynucleotides, releasing free uracil.. Excises uracil residues from the DNA which can arise as a result of misincorporation of dUMP residues by DNA polymerase or due to deamination of cytosine. The chain is Uracil-DNA glycosylase from Limosilactobacillus reuteri (strain DSM 20016) (Lactobacillus reuteri).